Here is a 147-residue protein sequence, read N- to C-terminus: Delta-latroinsectotoxin-Lhe1a (147 aa).

ANK repeat units follow at residues 57–59 (VSI), 66–78 (NNWTPLHFAIYFK), 79–96 (KNPAVSAVLILENKDIEA), and 98–125 (TSIMLIVQKLLLELYNYFINNYAETLDE).

The protein belongs to the cationic peptide 01 (latrotoxin) family. 04 (delta-latroinsectotoxin) subfamily. As to quaternary structure, homotetramer in membrane. As to expression, expressed by the venom gland.

The protein localises to the secreted. The protein resides in the target cell membrane. In terms of biological role, insecticidal presynaptic neurotoxin that induces massive neurotransmitter release at insect (but not vertebrate) neuromuscular junctions. Native toxin forms cation-permeable pores (with high permeability to calcium) in lipid membranes locust muscle membrane and artificial lipid bilayers. May bind to insect neurexin-1 homolog, insect adhesion G protein-coupled receptor L1 homolog, and insect receptor-type tyrosine-protein phosphatase S homolog, and induces neurotransmitter exocytosis both by forming tetrameric pores in membranes and signaling via G protein-coupled receptor. Oligomerization is a process independent of divalent cations. In Latrodectus hesperus (Western black widow spider), this protein is Delta-latroinsectotoxin-Lhe1a.